The chain runs to 288 residues: Elongation factor Ts (288 aa).

The interval 79 to 82 (TDFV) is involved in Mg(2+) ion dislocation from EF-Tu.

The protein belongs to the EF-Ts family.

It is found in the cytoplasm. In terms of biological role, associates with the EF-Tu.GDP complex and induces the exchange of GDP to GTP. It remains bound to the aminoacyl-tRNA.EF-Tu.GTP complex up to the GTP hydrolysis stage on the ribosome. The sequence is that of Elongation factor Ts from Ehrlichia chaffeensis (strain ATCC CRL-10679 / Arkansas).